We begin with the raw amino-acid sequence, 334 residues long: HTH-type transcriptional repressor PurR (334 aa).

An HTH lacI-type domain is found at 2 to 56; it reads ATIKDVARLAGVSTTTVSHVINKTRFVAETTQEKVMKAVDELNYAPSAVARSLKC. A DNA-binding region (H-T-H motif) is located at residues 4–23; it reads IKDVARLAGVSTTTVSHVIN. The DNA-binding element occupies 48 to 56; it reads SAVARSLKC. The hypoxanthine site is built by Phe73, Lys189, Phe220, and Asp274.

Homodimer.

Its pathway is purine metabolism; purine nucleotide biosynthesis [regulation]. Its function is as follows. Is the main repressor of the genes involved in the de novo synthesis of purine nucleotides, regulating purB, purC, purEK, purF, purHD, purL, purMN and guaBA expression. PurR is allosterically activated to bind its cognate DNA by binding the purine corepressors, hypoxanthine or guanine, thereby effecting transcription repression. The protein is HTH-type transcriptional repressor PurR of Vibrio campbellii (strain ATCC BAA-1116).